A 186-amino-acid polypeptide reads, in one-letter code: Large ribosomal subunit protein uL15 (186 aa).

Residues 1–48 form a disordered region; the sequence is MDLSSLRPAKGAVKARKRVGRGPGSGNGTTAGKGNKGQQSRSGYQRPV. The span at 21–35 shows a compositional bias: gly residues; that stretch reads RGPGSGNGTTAGKGN.

It belongs to the universal ribosomal protein uL15 family. In terms of assembly, part of the 50S ribosomal subunit.

Functionally, binds to the 23S rRNA. The chain is Large ribosomal subunit protein uL15 from Chlorobaculum tepidum (strain ATCC 49652 / DSM 12025 / NBRC 103806 / TLS) (Chlorobium tepidum).